The chain runs to 521 residues: Bifunctional purine biosynthesis protein PurH (521 aa).

The MGS-like domain occupies 1–147; the sequence is MAVIKRALIS…KNNRDVTVVV (147 aa).

The protein belongs to the PurH family.

It carries out the reaction (6R)-10-formyltetrahydrofolate + 5-amino-1-(5-phospho-beta-D-ribosyl)imidazole-4-carboxamide = 5-formamido-1-(5-phospho-D-ribosyl)imidazole-4-carboxamide + (6S)-5,6,7,8-tetrahydrofolate. The catalysed reaction is IMP + H2O = 5-formamido-1-(5-phospho-D-ribosyl)imidazole-4-carboxamide. It participates in purine metabolism; IMP biosynthesis via de novo pathway; 5-formamido-1-(5-phospho-D-ribosyl)imidazole-4-carboxamide from 5-amino-1-(5-phospho-D-ribosyl)imidazole-4-carboxamide (10-formyl THF route): step 1/1. The protein operates within purine metabolism; IMP biosynthesis via de novo pathway; IMP from 5-formamido-1-(5-phospho-D-ribosyl)imidazole-4-carboxamide: step 1/1. The sequence is that of Bifunctional purine biosynthesis protein PurH from Syntrophotalea carbinolica (strain DSM 2380 / NBRC 103641 / GraBd1) (Pelobacter carbinolicus).